A 654-amino-acid chain; its full sequence is Fatty acid photodecarboxylase, chloroplastic (654 aa).

The N-terminal 62 residues, 1–62 (MASITSRASA…RRGGALSARA (62 aa)), are a transit peptide targeting the chloroplast. Residues 93-94 (TA), Glu114, Leu162, Ser166, 170-173 (NATL), and Val298 each bind FAD. Hexadecanoate-binding residues include Cys432, Arg451, Tyr466, and Gln486. Residue Gly622 coordinates FAD.

It belongs to the GMC oxidoreductase family. Requires FAD as cofactor.

The protein localises to the plastid. It is found in the chloroplast. The catalysed reaction is a long-chain fatty acid + hnu + H(+) = a long-chain alkane + CO2. The enzyme catalyses hnu + hexadecanoate + H(+) = pentadecane + CO2. It carries out the reaction hnu + octadecanoate + H(+) = heptadecane + CO2. It catalyses the reaction heptadecanoate + hnu + H(+) = hexadecane + CO2. The catalysed reaction is hnu + tetradecanoate + H(+) = tridecane + CO2. The enzyme catalyses octanoate + hnu + H(+) = heptane + CO2. Activated by blue light and repressed by red light. Catalyzes the decarboxylation of free fatty acids to n-alkanes or n-alkenes in response to blue light. Substrate preference is toward fatty acids with C16 or C17 chains. Converts n-octanoic acid (C8 chain) more efficiently than palmitate (n-hexadecanoic acid, C16 chain) into n-heptane (C7 chain) and n-pentadecane (C15 chain), respectively, partly due to an autocatalytic effect of its n-heptane product. Saturated fatty acids are converted to alkanes, not alkenes. The decarboxylation is initiated through electron abstraction from the fatty acid by the photo-excited FAD. This is Fatty acid photodecarboxylase, chloroplastic from Chlorella variabilis (Green alga).